Reading from the N-terminus, the 144-residue chain is Bacilliredoxin BLi02323/BL05224 (144 aa).

The protein belongs to the bacilliredoxin family.

This Bacillus licheniformis (strain ATCC 14580 / DSM 13 / JCM 2505 / CCUG 7422 / NBRC 12200 / NCIMB 9375 / NCTC 10341 / NRRL NRS-1264 / Gibson 46) protein is Bacilliredoxin BLi02323/BL05224.